The primary structure comprises 129 residues: Large ribosomal subunit protein uL22 (129 aa).

Belongs to the universal ribosomal protein uL22 family. Part of the 50S ribosomal subunit.

This protein binds specifically to 23S rRNA; its binding is stimulated by other ribosomal proteins, e.g. L4, L17, and L20. It is important during the early stages of 50S assembly. It makes multiple contacts with different domains of the 23S rRNA in the assembled 50S subunit and ribosome. Its function is as follows. The globular domain of the protein is located near the polypeptide exit tunnel on the outside of the subunit, while an extended beta-hairpin is found that lines the wall of the exit tunnel in the center of the 70S ribosome. The chain is Large ribosomal subunit protein uL22 from Bartonella henselae (strain ATCC 49882 / DSM 28221 / CCUG 30454 / Houston 1) (Rochalimaea henselae).